Here is a 277-residue protein sequence, read N- to C-terminus: 4-hydroxy-3-methylbut-2-enyl diphosphate reductase (277 aa).

Position 12 (Cys-12) interacts with [4Fe-4S] cluster. (2E)-4-hydroxy-3-methylbut-2-enyl diphosphate contacts are provided by His-36 and His-70. The dimethylallyl diphosphate site is built by His-36 and His-70. Residues His-36 and His-70 each coordinate isopentenyl diphosphate. Position 92 (Cys-92) interacts with [4Fe-4S] cluster. His-120 is a (2E)-4-hydroxy-3-methylbut-2-enyl diphosphate binding site. Residue His-120 participates in dimethylallyl diphosphate binding. Position 120 (His-120) interacts with isopentenyl diphosphate. Glu-122 functions as the Proton donor in the catalytic mechanism. Residue Thr-158 coordinates (2E)-4-hydroxy-3-methylbut-2-enyl diphosphate. Cys-186 contributes to the [4Fe-4S] cluster binding site. The (2E)-4-hydroxy-3-methylbut-2-enyl diphosphate site is built by Ser-214, Asn-216, and Ser-258. Ser-214, Asn-216, and Ser-258 together coordinate dimethylallyl diphosphate. The isopentenyl diphosphate site is built by Ser-214, Asn-216, and Ser-258.

The protein belongs to the IspH family. [4Fe-4S] cluster is required as a cofactor.

It catalyses the reaction isopentenyl diphosphate + 2 oxidized [2Fe-2S]-[ferredoxin] + H2O = (2E)-4-hydroxy-3-methylbut-2-enyl diphosphate + 2 reduced [2Fe-2S]-[ferredoxin] + 2 H(+). The catalysed reaction is dimethylallyl diphosphate + 2 oxidized [2Fe-2S]-[ferredoxin] + H2O = (2E)-4-hydroxy-3-methylbut-2-enyl diphosphate + 2 reduced [2Fe-2S]-[ferredoxin] + 2 H(+). It participates in isoprenoid biosynthesis; dimethylallyl diphosphate biosynthesis; dimethylallyl diphosphate from (2E)-4-hydroxy-3-methylbutenyl diphosphate: step 1/1. It functions in the pathway isoprenoid biosynthesis; isopentenyl diphosphate biosynthesis via DXP pathway; isopentenyl diphosphate from 1-deoxy-D-xylulose 5-phosphate: step 6/6. Functionally, catalyzes the conversion of 1-hydroxy-2-methyl-2-(E)-butenyl 4-diphosphate (HMBPP) into a mixture of isopentenyl diphosphate (IPP) and dimethylallyl diphosphate (DMAPP). Acts in the terminal step of the DOXP/MEP pathway for isoprenoid precursor biosynthesis. The chain is 4-hydroxy-3-methylbut-2-enyl diphosphate reductase from Campylobacter jejuni subsp. jejuni serotype O:23/36 (strain 81-176).